The primary structure comprises 292 residues: tRNA pseudouridine synthase B (292 aa).

The active-site Nucleophile is the Asp-38.

Belongs to the pseudouridine synthase TruB family. Type 1 subfamily.

The catalysed reaction is uridine(55) in tRNA = pseudouridine(55) in tRNA. Responsible for synthesis of pseudouridine from uracil-55 in the psi GC loop of transfer RNAs. The polypeptide is tRNA pseudouridine synthase B (Streptococcus pneumoniae serotype 2 (strain D39 / NCTC 7466)).